Here is a 425-residue protein sequence, read N- to C-terminus: UDP-N-acetyl-D-glucosamine 6-dehydrogenase (425 aa).

Residues valine 17, aspartate 35, arginine 40, threonine 86, and threonine 121 each coordinate NAD(+). Cysteine 261 serves as the catalytic Nucleophile. NAD(+) is bound at residue arginine 332.

The protein belongs to the UDP-glucose/GDP-mannose dehydrogenase family. As to quaternary structure, homotrimer.

The catalysed reaction is UDP-N-acetyl-alpha-D-glucosamine + 2 NAD(+) + H2O = UDP-2-acetamido-2-deoxy-alpha-D-glucuronate + 2 NADH + 3 H(+). Its pathway is capsule biogenesis; capsule polysaccharide biosynthesis. It functions in the pathway glycan metabolism; Vi-antigen biosynthesis. Functionally, dehydrogenase required for the biosynthesis of the capsular polysaccharide, commonly referred as the Vi antigen, an important virulence factor. Catalyzes the conversion of UDP-N-acetylglucosamine (UDP-GlcNAc) to UDP-N-acetylglucosaminuronic acid (UDP-GlcNAcA). Cannot use UDP-GalNAc, UDP-Glc and UDP-Gal as substrates. The protein is UDP-N-acetyl-D-glucosamine 6-dehydrogenase of Salmonella typhi.